The primary structure comprises 691 residues: Elongation factor G (691 aa).

One can recognise a tr-type G domain in the interval 8-282; sequence DRVRNIGIAA…AVVDYLPAPI (275 aa). GTP is bound by residues 17-24, 81-85, and 135-138; these read AHIDAGKT, DTPGH, and NKMD.

The protein belongs to the TRAFAC class translation factor GTPase superfamily. Classic translation factor GTPase family. EF-G/EF-2 subfamily.

The protein resides in the cytoplasm. Functionally, catalyzes the GTP-dependent ribosomal translocation step during translation elongation. During this step, the ribosome changes from the pre-translocational (PRE) to the post-translocational (POST) state as the newly formed A-site-bound peptidyl-tRNA and P-site-bound deacylated tRNA move to the P and E sites, respectively. Catalyzes the coordinated movement of the two tRNA molecules, the mRNA and conformational changes in the ribosome. The protein is Elongation factor G of Synechococcus sp. (strain RCC307).